A 136-amino-acid polypeptide reads, in one-letter code: Nucleoside diphosphate kinase (136 aa).

6 residues coordinate ATP: K10, F58, R86, T92, R104, and N114. H117 serves as the catalytic Pros-phosphohistidine intermediate.

Belongs to the NDK family. As to quaternary structure, homotetramer. Requires Mg(2+) as cofactor.

Its subcellular location is the cytoplasm. It catalyses the reaction a 2'-deoxyribonucleoside 5'-diphosphate + ATP = a 2'-deoxyribonucleoside 5'-triphosphate + ADP. The enzyme catalyses a ribonucleoside 5'-diphosphate + ATP = a ribonucleoside 5'-triphosphate + ADP. Major role in the synthesis of nucleoside triphosphates other than ATP. The ATP gamma phosphate is transferred to the NDP beta phosphate via a ping-pong mechanism, using a phosphorylated active-site intermediate. The sequence is that of Nucleoside diphosphate kinase from Mycobacterium marinum (strain ATCC BAA-535 / M).